The following is a 75-amino-acid chain: MPQISRYSDEQVEQLLAELLNILEKHKAPTDLSLMVLGNMVTNLINTSIAPAQRQAIANSFARALQSSINEDKAH.

This sequence belongs to the UPF0352 family.

The polypeptide is UPF0352 protein YejL (Escherichia coli O127:H6 (strain E2348/69 / EPEC)).